The sequence spans 382 residues: N-acetyldiaminopimelate deacetylase (382 aa).

Residue Asp73 is part of the active site. The active-site Proton acceptor is the Glu132.

It belongs to the peptidase M20A family. N-acetyldiaminopimelate deacetylase subfamily.

It catalyses the reaction N-acetyl-(2S,6S)-2,6-diaminopimelate + H2O = (2S,6S)-2,6-diaminopimelate + acetate. It participates in amino-acid biosynthesis; L-lysine biosynthesis via DAP pathway; LL-2,6-diaminopimelate from (S)-tetrahydrodipicolinate (acetylase route): step 3/3. Catalyzes the conversion of N-acetyl-diaminopimelate to diaminopimelate and acetate. In Oenococcus oeni (strain ATCC BAA-331 / PSU-1), this protein is N-acetyldiaminopimelate deacetylase.